A 338-amino-acid polypeptide reads, in one-letter code: MRVLVTGGSGYIGSHTCVQLLQNGHDVVILDNLCNSKRSVLPVIERLGGKHPTFVEGDIRNEALITEILHDHAIDTVIHFAGLKAVGESVAKPLEYYDNNVNGTLRLVSAMRAANVKNLIFSSSATVYGDQPKIPYVESFPTGTPQSPYGKSKLMVEQILTDLQKAQPEWSIALLRYFNPVGAHPSGDMGEDPQGIPNNLMPYIAQVAVGRRESLAVFGNDYPTEDGTGVRDYIHVMDLADGHVVAMEKLADKSGVHIYNLGAGVGSSVLDVVNAFSKACGKPINYHFAPRRDGDLPAYWADASKADRELNWRVTRTLDEMAQDTWHWQSRHPQGYSD.

NAD(+)-binding positions include 11-12 (YI), 31-36 (DNLCNS), 58-59 (DI), 80-84 (FAGLK), N99, S124, Y149, K153, and F178. The substrate site is built by S124 and Y149. Y149 (proton acceptor) is an active-site residue. Substrate-binding positions include N179, 199 to 200 (NL), 216 to 218 (AVF), R231, 292 to 295 (RDGD), and Y299.

It belongs to the NAD(P)-dependent epimerase/dehydratase family. In terms of assembly, homodimer. Requires NAD(+) as cofactor.

The catalysed reaction is UDP-alpha-D-glucose = UDP-alpha-D-galactose. It participates in carbohydrate metabolism; galactose metabolism. Its function is as follows. Involved in the metabolism of galactose. Catalyzes the conversion of UDP-galactose (UDP-Gal) to UDP-glucose (UDP-Glc) through a mechanism involving the transient reduction of NAD. The sequence is that of UDP-glucose 4-epimerase (galE) from Salmonella typhi.